The chain runs to 342 residues: Inositol 2-dehydrogenase 2 (342 aa).

Belongs to the Gfo/Idh/MocA family. In terms of assembly, homotetramer.

The catalysed reaction is myo-inositol + NAD(+) = scyllo-inosose + NADH + H(+). Functionally, involved in the oxidation of myo-inositol (MI) to 2-keto-myo-inositol (2KMI or 2-inosose). This is Inositol 2-dehydrogenase 2 from Mycolicibacterium vanbaalenii (strain DSM 7251 / JCM 13017 / BCRC 16820 / KCTC 9966 / NRRL B-24157 / PYR-1) (Mycobacterium vanbaalenii).